A 110-amino-acid polypeptide reads, in one-letter code: uncharacterized protein (110 aa).

The next 3 membrane-spanning stretches (helical) occupy residues L4 to N26, A46 to L68, and L72 to T91.

The protein localises to the cell membrane. This is an uncharacterized protein from Bacillus subtilis (strain 168).